Here is a 497-residue protein sequence, read N- to C-terminus: Probable malate:quinone oxidoreductase (497 aa).

The protein belongs to the MQO family. It depends on FAD as a cofactor.

It catalyses the reaction (S)-malate + a quinone = a quinol + oxaloacetate. It functions in the pathway carbohydrate metabolism; tricarboxylic acid cycle; oxaloacetate from (S)-malate (quinone route): step 1/1. The polypeptide is Probable malate:quinone oxidoreductase (Exiguobacterium sibiricum (strain DSM 17290 / CCUG 55495 / CIP 109462 / JCM 13490 / 255-15)).